We begin with the raw amino-acid sequence, 258 residues long: Aspartate/glutamate leucyltransferase (258 aa).

The protein belongs to the R-transferase family. Bpt subfamily.

The protein resides in the cytoplasm. The catalysed reaction is N-terminal L-glutamyl-[protein] + L-leucyl-tRNA(Leu) = N-terminal L-leucyl-L-glutamyl-[protein] + tRNA(Leu) + H(+). The enzyme catalyses N-terminal L-aspartyl-[protein] + L-leucyl-tRNA(Leu) = N-terminal L-leucyl-L-aspartyl-[protein] + tRNA(Leu) + H(+). Functions in the N-end rule pathway of protein degradation where it conjugates Leu from its aminoacyl-tRNA to the N-termini of proteins containing an N-terminal aspartate or glutamate. This chain is Aspartate/glutamate leucyltransferase, found in Rhodopseudomonas palustris (strain BisA53).